Here is a 274-residue protein sequence, read N- to C-terminus: Nitrogenase iron protein (274 aa).

8–15 (GKGGIGKS) contacts ATP. Cys94 contacts [4Fe-4S] cluster. Arg97 is modified (ADP-ribosylarginine; by dinitrogenase reductase ADP-ribosyltransferase). Cys131 is a [4Fe-4S] cluster binding site.

The protein belongs to the NifH/BchL/ChlL family. As to quaternary structure, homodimer. [4Fe-4S] cluster serves as cofactor. The reversible ADP-ribosylation of Arg-97 inactivates the nitrogenase reductase and regulates nitrogenase activity.

It catalyses the reaction N2 + 8 reduced [2Fe-2S]-[ferredoxin] + 16 ATP + 16 H2O = H2 + 8 oxidized [2Fe-2S]-[ferredoxin] + 2 NH4(+) + 16 ADP + 16 phosphate + 6 H(+). The key enzymatic reactions in nitrogen fixation are catalyzed by the nitrogenase complex, which has 2 components: the iron protein and the molybdenum-iron protein. The chain is Nitrogenase iron protein from Chlorobium limicola (strain DSM 245 / NBRC 103803 / 6330).